A 276-amino-acid chain; its full sequence is Acyl-[acyl-carrier-protein]--UDP-N-acetylglucosamine O-acyltransferase (276 aa).

It belongs to the transferase hexapeptide repeat family. LpxA subfamily. As to quaternary structure, homotrimer.

The protein resides in the cytoplasm. The catalysed reaction is a (3R)-hydroxyacyl-[ACP] + UDP-N-acetyl-alpha-D-glucosamine = a UDP-3-O-[(3R)-3-hydroxyacyl]-N-acetyl-alpha-D-glucosamine + holo-[ACP]. The protein operates within glycolipid biosynthesis; lipid IV(A) biosynthesis; lipid IV(A) from (3R)-3-hydroxytetradecanoyl-[acyl-carrier-protein] and UDP-N-acetyl-alpha-D-glucosamine: step 1/6. Its function is as follows. Involved in the biosynthesis of lipid A, a phosphorylated glycolipid that anchors the lipopolysaccharide to the outer membrane of the cell. The polypeptide is Acyl-[acyl-carrier-protein]--UDP-N-acetylglucosamine O-acyltransferase (Rippkaea orientalis (strain PCC 8801 / RF-1) (Cyanothece sp. (strain PCC 8801))).